The following is a 334-amino-acid chain: AA9 family lytic polysaccharide monooxygenase A (334 aa).

The first 22 residues, 1–22 (MSPSFKSTAILGAVALAARVRA), serve as a signal peptide directing secretion. The Cu(2+) site is built by histidine 23 and histidine 108. 2 disulfide bridges follow: cysteine 78–cysteine 200 and cysteine 119–cysteine 123. Asparagine 160 carries an N-linked (GlcNAc...) asparagine glycan. The O2 site is built by histidine 186 and glutamine 195. Tyrosine 197 lines the Cu(2+) pocket. N-linked (GlcNAc...) asparagine glycosylation is present at asparagine 208. Residues 244 to 304 (GPALYTGGSS…PSPSLPVEIP (61 aa)) are disordered. Positions 249–265 (TGGSSPSPNPPTSTQSP) are enriched in low complexity.

The protein belongs to the polysaccharide monooxygenase AA9 family. The cofactor is Cu(2+).

The protein localises to the secreted. The enzyme catalyses [(1-&gt;4)-beta-D-glucosyl]n+m + reduced acceptor + O2 = 4-dehydro-beta-D-glucosyl-[(1-&gt;4)-beta-D-glucosyl]n-1 + [(1-&gt;4)-beta-D-glucosyl]m + acceptor + H2O.. Functionally, lytic polysaccharide monooxygenase (LPMO) that depolymerizes crystalline and amorphous polysaccharides via the oxidation of scissile alpha- or beta-(1-4)-glycosidic bonds, yielding C1 or C4 oxidation products. Catalysis by LPMOs requires the reduction of the active-site copper from Cu(II) to Cu(I) by a reducing agent and H(2)O(2) or O(2) as a cosubstrate. Active on hemicelluloses, including xylan, glucomannan, and xyloglucan. Shows clear activity on cellooligosaccharides, generating C4 oxidation products. Also displays activity on konjac glucomannan (KGM), a linear beta-1,4-linked mannan with randomly distributed glucosyl residues; as well as trace activity on lichenan, a linear beta-1,3-beta-1,4-glucan with a 1:2 ratio of beta-1,3 to beta-1,4 linkages. Has no activity on ivory nut mannan (INM), a linear beta-1,4-linked mannan without substitutions. This chain is AA9 family lytic polysaccharide monooxygenase A, found in Malbranchea cinnamomea (Thermophilic fungus).